The following is a 217-amino-acid chain: Lipid A acyltransferase PagP (217 aa).

Positions 1 to 24 are cleaved as a signal peptide; the sequence is MYLKRILITLSLITLPIVPCLSYA. Active-site residues include His89, Asp132, and Ser133.

It belongs to the lipid A palmitoyltransferase family. Homodimer.

The protein localises to the cell outer membrane. The enzyme catalyses a lipid A + a 1,2-diacyl-sn-glycero-3-phosphocholine = a hepta-acyl lipid A + a 2-acyl-sn-glycero-3-phosphocholine. The catalysed reaction is a lipid IVA + a 1,2-diacyl-sn-glycero-3-phosphocholine = a lipid IVB + a 2-acyl-sn-glycero-3-phosphocholine. It catalyses the reaction a lipid IIA + a 1,2-diacyl-sn-glycero-3-phosphocholine = a lipid IIB + a 2-acyl-sn-glycero-3-phosphocholine. Its function is as follows. Transfers a fatty acid residue from the sn-1 position of a phospholipid to the N-linked hydroxyfatty acid chain on the proximal unit of lipid A or its precursors. The polypeptide is Lipid A acyltransferase PagP (Pectobacterium atrosepticum (strain SCRI 1043 / ATCC BAA-672) (Erwinia carotovora subsp. atroseptica)).